The sequence spans 206 residues: MLGLIGKKVGMTQIFQKNGIVIPVTVIEFQPNYIIGKKTVDRDGYSALIAGSVDLKGSKVSKPIKGQYKSLKDIEPKKYVIELKGLDGYDAGDEIKVDVFKSVKYVDVTGTTKGKGFQGAMKRHNFSGGPSSHGSKFHRHLGGTGQATTPARTFKGTKMAGRMGGNKQTIQNLEVVLIDEENRAILVKGAVPGAKGSFVVVKKSKK.

Positions 127–151 (SGGPSSHGSKFHRHLGGTGQATTPA) are disordered.

It belongs to the universal ribosomal protein uL3 family. Part of the 50S ribosomal subunit. Forms a cluster with proteins L14 and L19.

Functionally, one of the primary rRNA binding proteins, it binds directly near the 3'-end of the 23S rRNA, where it nucleates assembly of the 50S subunit. This chain is Large ribosomal subunit protein uL3, found in Borrelia garinii subsp. bavariensis (strain ATCC BAA-2496 / DSM 23469 / PBi) (Borreliella bavariensis).